We begin with the raw amino-acid sequence, 304 residues long: Homoserine O-succinyltransferase (304 aa).

The active-site Acyl-thioester intermediate is the cysteine 142. Substrate contacts are provided by lysine 163 and serine 192. Histidine 235 acts as the Proton acceptor in catalysis. The active site involves glutamate 237. Substrate is bound at residue arginine 249.

It belongs to the MetA family.

The protein resides in the cytoplasm. It carries out the reaction L-homoserine + succinyl-CoA = O-succinyl-L-homoserine + CoA. It participates in amino-acid biosynthesis; L-methionine biosynthesis via de novo pathway; O-succinyl-L-homoserine from L-homoserine: step 1/1. Functionally, transfers a succinyl group from succinyl-CoA to L-homoserine, forming succinyl-L-homoserine. The polypeptide is Homoserine O-succinyltransferase (Blochmanniella pennsylvanica (strain BPEN)).